The primary structure comprises 347 residues: Transcription factor JunD (347 aa).

The segment at 1 to 46 (METPFYGDEALSGLGGGGSSSGGGGSFASPGRLFPGAPPTAAPGSM) is disordered. The segment covering 13-26 (GLGGGGSSSGGGGS) has biased composition (gly residues). Positions 29–41 (SPGRLFPGAPPTA) match the Menin-binding motif (MBM) motif. Residues 48–57 (KKDALTLSLS) carry the MAP kinase docking motif; essential for its phosphorylation motif. Residues 63-91 (ALKPAAAPPPGPLRTDGAPGTAPPDGLLA) form a disordered region. The residue at position 92 (serine 92) is a Phosphoserine. At serine 102 the chain carries Phosphoserine; by MAPK8. Residue threonine 119 is modified to Phosphothreonine. Disordered stretches follow at residues 164–183 (AAAG…SELA) and 218–264 (EPVP…IDMD). Pro residues predominate over residues 220–231 (VPFPPPPPPGTL). Phosphoserine is present on residues serine 251, serine 255, and serine 259. The tract at residues 268–295 (RIKAERKRLRNRIAASKCRKRKLERISR) is basic motif. One can recognise a bZIP domain in the interval 268-331 (RIKAERKRLR…AQLKQKVLSH (64 aa)). The leucine-zipper stretch occupies residues 296 to 324 (LEEKVKTLKSQNTELASTASLLREQVAQL).

Belongs to the bZIP family. Jun subfamily. Heterodimer; binds DNA as a heterodimer. Component of an AP-1 transcription factor complex composed of JUN-FOS heterodimers. As part of the AP-1 transcription factor complex, forms heterodimers with FOS proteins, thereby binding to the AP-1 consensus sequence and stimulating transcription. Forms heterodimers with FOSB; thereby binding to the AP-1 consensus sequence. Interacts (via MBM motif) with MEN1; this interaction represses transcriptional activation. Interacts with MAPK10; this interaction is inhibited in the presence of MEN1. In terms of processing, phosphorylated by MAP kinases MAPK8 and MAPK10; phosphorylation is inhibited in the presence of MEN1.

It is found in the nucleus. In terms of biological role, transcription factor binding AP-1 sites. Heterodimerizes with proteins of the FOS family to form an AP-1 transcription factor complex, thereby enhancing their DNA binding activity to an AP-1 consensus sequence 3'-TGA[GC]TCA-5' and enhancing their transcriptional activity. The polypeptide is Transcription factor JunD (JUND) (Bos taurus (Bovine)).